Reading from the N-terminus, the 281-residue chain is Octanoyl-[GcvH]:protein N-octanoyltransferase (281 aa).

In terms of domain architecture, BPL/LPL catalytic spans 44–250 (GESAATMRSW…TLQQFAPKLT (207 aa)). Cysteine 149 (acyl-thioester intermediate) is an active-site residue.

Belongs to the octanoyltransferase LipL family.

It carries out the reaction N(6)-octanoyl-L-lysyl-[glycine-cleavage complex H protein] + L-lysyl-[lipoyl-carrier protein] = N(6)-octanoyl-L-lysyl-[lipoyl-carrier protein] + L-lysyl-[glycine-cleavage complex H protein]. It participates in protein modification; protein lipoylation via endogenous pathway; protein N(6)-(lipoyl)lysine from octanoyl-[acyl-carrier-protein]. Functionally, catalyzes the amidotransfer (transamidation) of the octanoyl moiety from octanoyl-GcvH to the lipoyl domain of the E2 subunit of lipoate-dependent enzymes. This Bacillus anthracis protein is Octanoyl-[GcvH]:protein N-octanoyltransferase.